The chain runs to 562 residues: MSGTILENLSGRKLSILVSSLMLCQVVCFLMGGLFAPVPAGHQTVLGSKCRDVPGRQNDTSFFLYSRGNGACKSLQDIDIEQDELKMANQLVYVFQMPLPRDNNTLQYSRWQQNLIGVLQVDIAYDSASELREPPKELQLTIDTRLAYRNQKDADTDWKLYAHSVEQRYLDCHASHVGRLETLYTCDIIPLFELGALHHNFYLLNLRFPMDTPKQMNLQFGHMHDLTLTAIHQNGGFTQVWLVLKTLLFPFVIGIMMWFWRRVHILQRSPALLEYMLFYLGGALSFLNLPLELLTLGVEMPYMLLLSDVRQGIFYAMLLSFWLVFAGEHMLIQDSPSKSTIRSRYWKHLSAVVVGCISLFVFDICERGVQMRNPFYSIWTTPLGAKVAMSFIVLAGVSAAIYFLFLCFMVWKVFKDIGDKRTSLPSMSQARRLHYEGLIYRFKFLMLATLLCAGLTVAGFIMGQMAEGHWKWNENIEIQLTSAFLTGVYGMWNIYIFALIILYAPSHKQWPTMRHSDETTQSNENIVASAASEEIEFSNLPSDSNPSEISSLTSFTRKVAFD.

At 1–15 the chain is on the cytoplasmic side; it reads MSGTILENLSGRKLS. A helical transmembrane segment spans residues 16–36; that stretch reads ILVSSLMLCQVVCFLMGGLFA. The Lumenal portion of the chain corresponds to 37–239; it reads PVPAGHQTVL…AIHQNGGFTQ (203 aa). N-linked (GlcNAc...) asparagine glycans are attached at residues Asn-58 and Asn-103. A helical membrane pass occupies residues 240 to 260; that stretch reads VWLVLKTLLFPFVIGIMMWFW. Over 261–275 the chain is Cytoplasmic; that stretch reads RRVHILQRSPALLEY. The chain crosses the membrane as a helical span at residues 276–296; it reads MLFYLGGALSFLNLPLELLTL. The Lumenal portion of the chain corresponds to 297–311; it reads GVEMPYMLLLSDVRQ. The helical transmembrane segment at 312 to 332 threads the bilayer; the sequence is GIFYAMLLSFWLVFAGEHMLI. Residues 333 to 344 lie on the Cytoplasmic side of the membrane; it reads QDSPSKSTIRSR. Residues 345–365 form a helical membrane-spanning segment; it reads YWKHLSAVVVGCISLFVFDIC. Residues 366–390 lie on the Lumenal side of the membrane; the sequence is ERGVQMRNPFYSIWTTPLGAKVAMS. The chain crosses the membrane as a helical span at residues 391-411; the sequence is FIVLAGVSAAIYFLFLCFMVW. At 412-441 the chain is on the cytoplasmic side; it reads KVFKDIGDKRTSLPSMSQARRLHYEGLIYR. Residues 442 to 462 traverse the membrane as a helical segment; that stretch reads FKFLMLATLLCAGLTVAGFIM. Residues 463-482 lie on the Lumenal side of the membrane; the sequence is GQMAEGHWKWNENIEIQLTS. The chain crosses the membrane as a helical span at residues 483-503; that stretch reads AFLTGVYGMWNIYIFALIILY. Residues 504–562 lie on the Cytoplasmic side of the membrane; sequence APSHKQWPTMRHSDETTQSNENIVASAASEEIEFSNLPSDSNPSEISSLTSFTRKVAFD.

The protein belongs to the wntless family. In terms of assembly, interacts with wg; in the Golgi. Interacts with Vps35, a component of the retromer complex; wls stability is regulated by Vps35.

It is found in the presynaptic cell membrane. The protein localises to the postsynaptic cell membrane. The protein resides in the cell membrane. Its subcellular location is the endoplasmic reticulum membrane. It localises to the endosome membrane. It is found in the golgi apparatus membrane. A segment polarity gene required for wingless (wg)-dependent patterning processes, acting in both wg-sending cells and wg-target cells. In non-neuronal cells wls directs wg secretion. The wls traffic loop encompasses the Golgi, the cell surface, an endocytic compartment and a retrograde route leading back to the Golgi, and involves clathrin-mediated endocytosis and the retromer complex (a conserved protein complex consisting of Vps35 and Vps26). In neuronal cells (the larval motorneuron NMJ), the wg signal moves across the synapse via the release of wls-containing exosome-like vesicles. Postsynaptic wls is required for the trafficking of fz2 through the fz2-interacting protein Grip. This Drosophila grimshawi (Hawaiian fruit fly) protein is Protein wntless.